The primary structure comprises 198 residues: TM2 domain-containing protein 2 (198 aa).

A signal peptide spans 1-27 (MRWPVPPLGYLLLGGQGLLLTFSLISS). At 28–128 (QNNTSPVTYP…FLRGNRPCIK (101 aa)) the chain is on the extracellular side. 3 N-linked (GlcNAc...) asparagine glycosylation sites follow: asparagine 29, asparagine 40, and asparagine 76. Residues 129 to 149 (YTGHYFITTLLYSFFLGCFGV) traverse the membrane as a helical segment. A TM2 domain is found at 131 to 179 (GHYFITTLLYSFFLGCFGVDRFCLGHTGTAVGKLLTWGGLGIWWFVDLI). Residues 150 to 166 (DRFCLGHTGTAVGKLLT) lie on the Cytoplasmic side of the membrane. Residues 167-187 (WGGLGIWWFVDLILLITGGLM) form a helical membrane-spanning segment. Over 188–198 (PSDNSNWCTIY) the chain is Extracellular.

Belongs to the TM2 family.

It localises to the membrane. The protein is TM2 domain-containing protein 2 (tm2d2) of Xenopus laevis (African clawed frog).